Reading from the N-terminus, the 440-residue chain is Ribulose bisphosphate carboxylase large chain (440 aa).

Lys4 carries the N6,N6,N6-trimethyllysine modification. Substrate contacts are provided by Asn113 and Thr163. The Proton acceptor role is filled by Lys165. Residue Lys167 participates in substrate binding. Mg(2+)-binding residues include Lys191, Asp193, and Glu194. Lys191 carries the post-translational modification N6-carboxylysine. Catalysis depends on His284, which acts as the Proton acceptor. The substrate site is built by Arg285, His317, and Ser369.

Belongs to the RuBisCO large chain family. Type I subfamily. As to quaternary structure, heterohexadecamer of 8 large chains and 8 small chains; disulfide-linked. The disulfide link is formed within the large subunit homodimers. The cofactor is Mg(2+). In terms of processing, the disulfide bond which can form in the large chain dimeric partners within the hexadecamer appears to be associated with oxidative stress and protein turnover.

It is found in the plastid. The protein localises to the chloroplast. The catalysed reaction is 2 (2R)-3-phosphoglycerate + 2 H(+) = D-ribulose 1,5-bisphosphate + CO2 + H2O. It catalyses the reaction D-ribulose 1,5-bisphosphate + O2 = 2-phosphoglycolate + (2R)-3-phosphoglycerate + 2 H(+). RuBisCO catalyzes two reactions: the carboxylation of D-ribulose 1,5-bisphosphate, the primary event in carbon dioxide fixation, as well as the oxidative fragmentation of the pentose substrate in the photorespiration process. Both reactions occur simultaneously and in competition at the same active site. The sequence is that of Ribulose bisphosphate carboxylase large chain from Matteuccia struthiopteris (European ostrich fern).